Reading from the N-terminus, the 625-residue chain is MSQSLKFAPPFQSFVDASFFQVFSRLKLDVLRLDSHELPLHAKVDLAGLARGSSISHVFLDSQSFDEATASLPGISLRGSFFNFNTLEEFKRLDKGRFLSEQAQLLWEAGVNGYLDEAAGFFVICFADLKKYRFYYWFATPCFQPETLELKVVKREALTEIDKFSNFIEQNKILCGVLNEETGEVIRASRHELERYSTLVVRDTSNIEHCPTSLVKNFVAVWRHHNPNRSECRVLLLRETCSFSLELSVTGDAMSTSQLKASGWERNVRGLLTPKISELGAIIDPTKLAEQSIDLNLKLMKWRLVPDINLDIVKNCKVLLLGAGTLGCYVARSLLAWGVRKITFVDNGSVSYSNPVRQPLFNFTDCGQPKATSAAAAMKAIFPLVDATGFQLEVPMIGHPLTDEARQKKDYEELRQLIRDHDIVFLLMDSRETRWLPTILGNLESKLVINAALGFDSYLVMRHGNYEQPESSRLGCYFCHDVVAPSDSLTDRTLDEMCTVTRPGVALIAAAYATELAVSVLQHPQGNNAPETSESVLGSVPHQLRGFLPQLSTVKLRTPAYKHCSACSSVIVDAVRENGWEFLREALVDHRIVERLSGLAQVQQETETFLATMEISDDDCFDEIS.

Residues 322–327 (GAGTLG) carry the GXGXXG motif motif. Cys498 functions as the Glycyl thioester intermediate in the catalytic mechanism.

The protein belongs to the ATG7 family. As to quaternary structure, homodimer.

Its subcellular location is the cytoplasm. The protein localises to the preautophagosomal structure. In terms of biological role, E1-like activating enzyme involved in the 2 ubiquitin-like systems required for cytoplasm to vacuole transport (Cvt) and autophagy. Activates ATG12 for its conjugation with ATG5 and ATG8 for its conjugation with phosphatidylethanolamine. Both systems are needed for the ATG8 association to Cvt vesicles and autophagosomes membranes. Autophagy is essential for maintenance of amino acid levels and protein synthesis under nitrogen starvation. Required for selective autophagic degradation of the nucleus (nucleophagy) as well as for mitophagy which contributes to regulate mitochondrial quantity and quality by eliminating the mitochondria to a basal level to fulfill cellular energy requirements and preventing excess ROS production. Plays a role in the regulation of filamentous growth and chronological longevity. This is Ubiquitin-like modifier-activating enzyme ATG7 (ATG7) from Eremothecium gossypii (strain ATCC 10895 / CBS 109.51 / FGSC 9923 / NRRL Y-1056) (Yeast).